A 385-amino-acid chain; its full sequence is DNA replication and repair protein RecF (385 aa).

Gly30–Thr37 is an ATP binding site.

Belongs to the RecF family.

The protein resides in the cytoplasm. Functionally, the RecF protein is involved in DNA metabolism; it is required for DNA replication and normal SOS inducibility. RecF binds preferentially to single-stranded, linear DNA. It also seems to bind ATP. The chain is DNA replication and repair protein RecF from Mycobacterium marinum (strain ATCC BAA-535 / M).